The following is a 205-amino-acid chain: Nucleoside triphosphate pyrophosphatase (205 aa).

Residue D76 is the Proton acceptor of the active site.

Belongs to the Maf family. The cofactor is a divalent metal cation.

It is found in the cytoplasm. The catalysed reaction is a ribonucleoside 5'-triphosphate + H2O = a ribonucleoside 5'-phosphate + diphosphate + H(+). It carries out the reaction a 2'-deoxyribonucleoside 5'-triphosphate + H2O = a 2'-deoxyribonucleoside 5'-phosphate + diphosphate + H(+). Its function is as follows. Nucleoside triphosphate pyrophosphatase. May have a dual role in cell division arrest and in preventing the incorporation of modified nucleotides into cellular nucleic acids. This is Nucleoside triphosphate pyrophosphatase from Orientia tsutsugamushi (strain Boryong) (Rickettsia tsutsugamushi).